The chain runs to 250 residues: L-ascorbate peroxidase 1, cytosolic (250 aa).

The active-site Proton acceptor is the histidine 42. The segment at 113-137 is disordered; it reads VPFHPGREDKPAPPPEGRLPDATKG. Histidine 163 serves as a coordination point for heme b. K(+)-binding residues include threonine 164, threonine 180, asparagine 182, and aspartate 187.

The protein belongs to the peroxidase family. Ascorbate peroxidase subfamily. Heme b is required as a cofactor. As to expression, expressed in roots, aerial vegetative parts and reproductive organs. Expressed in roots, leaves, stems and flowers.

The protein localises to the cytoplasm. The enzyme catalyses L-ascorbate + H2O2 = L-dehydroascorbate + 2 H2O. With respect to regulation, inhibited by p-chloromercuriphenylsulfonic acid (CMPSA). In terms of biological role, plays a key role in hydrogen peroxide removal. The chain is L-ascorbate peroxidase 1, cytosolic from Oryza sativa subsp. japonica (Rice).